The following is an 89-amino-acid chain: Small ribosomal subunit protein bS16 (89 aa).

It belongs to the bacterial ribosomal protein bS16 family.

The polypeptide is Small ribosomal subunit protein bS16 (Anaplasma marginale (strain Florida)).